Here is a 74-residue protein sequence, read N- to C-terminus: Putative ribosome-binding protein YbzG (74 aa).

This chain is Putative ribosome-binding protein YbzG (ybzG), found in Bacillus subtilis (strain 168).